The following is a 286-amino-acid chain: ATP synthase gamma chain (286 aa).

Belongs to the ATPase gamma chain family. In terms of assembly, F-type ATPases have 2 components, CF(1) - the catalytic core - and CF(0) - the membrane proton channel. CF(1) has five subunits: alpha(3), beta(3), gamma(1), delta(1), epsilon(1). CF(0) has three main subunits: a, b and c.

The protein resides in the cell inner membrane. Functionally, produces ATP from ADP in the presence of a proton gradient across the membrane. The gamma chain is believed to be important in regulating ATPase activity and the flow of protons through the CF(0) complex. In Shewanella denitrificans (strain OS217 / ATCC BAA-1090 / DSM 15013), this protein is ATP synthase gamma chain.